The primary structure comprises 399 residues: Tryptophan synthase beta chain (399 aa).

Lys-92 carries the post-translational modification N6-(pyridoxal phosphate)lysine.

The protein belongs to the TrpB family. As to quaternary structure, tetramer of two alpha and two beta chains. Requires pyridoxal 5'-phosphate as cofactor.

The catalysed reaction is (1S,2R)-1-C-(indol-3-yl)glycerol 3-phosphate + L-serine = D-glyceraldehyde 3-phosphate + L-tryptophan + H2O. The protein operates within amino-acid biosynthesis; L-tryptophan biosynthesis; L-tryptophan from chorismate: step 5/5. In terms of biological role, the beta subunit is responsible for the synthesis of L-tryptophan from indole and L-serine. This Bordetella petrii (strain ATCC BAA-461 / DSM 12804 / CCUG 43448) protein is Tryptophan synthase beta chain.